A 338-amino-acid chain; its full sequence is Ornithine carbamoyltransferase (338 aa).

Residues S56–T59, R107, and H134–Q137 contribute to the carbamoyl phosphate site. L-ornithine contacts are provided by residues N168, D232, and S236–M237. Carbamoyl phosphate is bound by residues C274–L275 and R320.

It belongs to the aspartate/ornithine carbamoyltransferase superfamily. OTCase family.

It localises to the cytoplasm. It catalyses the reaction carbamoyl phosphate + L-ornithine = L-citrulline + phosphate + H(+). It functions in the pathway amino-acid biosynthesis; L-arginine biosynthesis; L-arginine from L-ornithine and carbamoyl phosphate: step 1/3. Its function is as follows. Reversibly catalyzes the transfer of the carbamoyl group from carbamoyl phosphate (CP) to the N(epsilon) atom of ornithine (ORN) to produce L-citrulline. The sequence is that of Ornithine carbamoyltransferase (argI) from Buchnera aphidicola subsp. Acyrthosiphon pisum (strain APS) (Acyrthosiphon pisum symbiotic bacterium).